A 523-amino-acid polypeptide reads, in one-letter code: Peptide chain release factor 3 (523 aa).

The tr-type G domain maps to 8–275; sequence KKRRTFAIIS…TFLEYAPEPH (268 aa). GTP contacts are provided by residues 17-24, 85-89, and 139-142; these read SHPDAGKT, DTPGH, and NKLD.

The protein belongs to the TRAFAC class translation factor GTPase superfamily. Classic translation factor GTPase family. PrfC subfamily.

The protein localises to the cytoplasm. Increases the formation of ribosomal termination complexes and stimulates activities of RF-1 and RF-2. It binds guanine nucleotides and has strong preference for UGA stop codons. It may interact directly with the ribosome. The stimulation of RF-1 and RF-2 is significantly reduced by GTP and GDP, but not by GMP. This chain is Peptide chain release factor 3 (prfC), found in Lactococcus lactis subsp. lactis (strain IL1403) (Streptococcus lactis).